Reading from the N-terminus, the 955-residue chain is Histone deacetylase 6 (955 aa).

Histone deacetylase stretches follow at residues 15–337 and 425–749; these read TLIG…YAPF and METL…VLQN. His146 serves as the catalytic 1. His561 functions as the 2 in the catalytic mechanism. Positions 815 to 840 are disordered; sequence SIDMADQSSSSGSSSSSTRPSHNLEI. Positions 818 to 831 are enriched in low complexity; sequence MADQSSSSGSSSSS. The UBP-type zinc finger occupies 853–951; the sequence is ATCPHLKEVK…SAAHESKFGE (99 aa). Positions 855, 857, 875, 878, 887, 890, and 895 each coordinate Zn(2+). A ubiquitin binding region spans residues 896–898; that stretch reads GRF. Zn(2+) contacts are provided by His902, His906, His912, Cys925, and Cys928. The tract at residues 924-931 is ubiquitin binding; the sequence is WCYPCDSY.

The protein belongs to the histone deacetylase family. HD type 2 subfamily. It depends on Zn(2+) as a cofactor.

It localises to the nucleus. The enzyme catalyses N(6)-acetyl-L-lysyl-[histone] + H2O = L-lysyl-[histone] + acetate. Its function is as follows. Probable histone deacetylase. Histone deacetylases are responsible for the deacetylation of lysine residues on the N-terminal part of the core histones (H2A, H2B, H3 and H4). Histone deacetylation gives a tag for epigenetic repression and plays an important role in transcriptional regulation, cell cycle progression and developmental events. Histone deacetylases act via the formation of large multiprotein complexes. The protein is Histone deacetylase 6 (hda-6) of Caenorhabditis elegans.